The following is a 207-amino-acid chain: ATP-dependent Clp protease proteolytic subunit (207 aa).

The active-site Nucleophile is serine 111. Histidine 136 is an active-site residue.

Belongs to the peptidase S14 family. In terms of assembly, fourteen ClpP subunits assemble into 2 heptameric rings which stack back to back to give a disk-like structure with a central cavity, resembling the structure of eukaryotic proteasomes.

The protein localises to the cytoplasm. The enzyme catalyses Hydrolysis of proteins to small peptides in the presence of ATP and magnesium. alpha-casein is the usual test substrate. In the absence of ATP, only oligopeptides shorter than five residues are hydrolyzed (such as succinyl-Leu-Tyr-|-NHMec, and Leu-Tyr-Leu-|-Tyr-Trp, in which cleavage of the -Tyr-|-Leu- and -Tyr-|-Trp bonds also occurs).. Its function is as follows. Cleaves peptides in various proteins in a process that requires ATP hydrolysis. Has a chymotrypsin-like activity. Plays a major role in the degradation of misfolded proteins. The polypeptide is ATP-dependent Clp protease proteolytic subunit (Yersinia pseudotuberculosis serotype O:1b (strain IP 31758)).